We begin with the raw amino-acid sequence, 645 residues long: Synaptotagmin-16 (645 aa).

3 disordered regions span residues Ala102–Ser121, Glu144–Glu192, and Gln206–Val344. The segment covering Glu167 to Ser177 has biased composition (polar residues). Positions Gly179–Glu192 are enriched in acidic residues. Residues His287–Gly303 are compositionally biased toward polar residues. The C2 1 domain occupies Lys350–Leu469. The disordered stretch occupies residues Ser478–His503. The segment covering Ser485 to Ser502 has biased composition (low complexity). The C2 2 domain occupies Gly505–His640.

This sequence belongs to the synaptotagmin family. As to quaternary structure, homodimer. Can also form heterodimers. Expressed in brain.

May be involved in the trafficking and exocytosis of secretory vesicles in non-neuronal tissues. Is Ca(2+)-independent. This chain is Synaptotagmin-16 (SYT16), found in Homo sapiens (Human).